A 121-amino-acid polypeptide reads, in one-letter code: Basic phospholipase A2 (121 aa).

7 disulfides stabilise this stretch: Cys-26–Cys-114, Cys-28–Cys-44, Cys-43–Cys-94, Cys-49–Cys-121, Cys-50–Cys-87, Cys-57–Cys-80, and Cys-74–Cys-85. Positions 27, 29, and 31 each coordinate Ca(2+). His-47 is a catalytic residue. Asp-48 is a binding site for Ca(2+). Asp-88 is a catalytic residue.

Homopentamer. Ca(2+) serves as cofactor. As to expression, expressed by the venom gland.

Its subcellular location is the secreted. The catalysed reaction is a 1,2-diacyl-sn-glycero-3-phosphocholine + H2O = a 1-acyl-sn-glycero-3-phosphocholine + a fatty acid + H(+). Functionally, snake venom phospholipase A2 (PLA2) that displays moderate myotoxic activity in vivo, and cytotoxic activity in vitro. In vitro, shows anticoagulant activity on human plasma and in mice causes inflammatory cell infiltration and myonecrosis in the gastrocnemius muscles of CD-1 mice 3 hours after injection (100 ug). PLA2 catalyzes the calcium-dependent hydrolysis of the 2-acyl groups in 3-sn-phosphoglycerides. The polypeptide is Basic phospholipase A2 (Porthidium ophryomegas (Slender hognose viper)).